The primary structure comprises 286 residues: Large ribosomal subunit protein uL4m (286 aa).

The transit peptide at 1–26 (MTIKRNLVKTLQSIRYQATTATAHAE) directs the protein to the mitochondrion. Positions 85–132 (RRVGASNPPGRSENGFSRRKLMPQKGSGRARVGDANSPTRHNGGRALA) are disordered.

The protein belongs to the universal ribosomal protein uL4 family. In terms of assembly, component of the mitochondrial large ribosomal subunit (mt-LSU). Mature yeast 74S mitochondrial ribosomes consist of a small (37S) and a large (54S) subunit. The 37S small subunit contains a 15S ribosomal RNA (15S mt-rRNA) and 34 different proteins. The 54S large subunit contains a 21S rRNA (21S mt-rRNA) and 46 different proteins.

It localises to the mitochondrion. Component of the mitochondrial ribosome (mitoribosome), a dedicated translation machinery responsible for the synthesis of mitochondrial genome-encoded proteins, including at least some of the essential transmembrane subunits of the mitochondrial respiratory chain. The mitoribosomes are attached to the mitochondrial inner membrane and translation products are cotranslationally integrated into the membrane. This chain is Large ribosomal subunit protein uL4m (YML6), found in Saccharomyces cerevisiae (strain ATCC 204508 / S288c) (Baker's yeast).